Reading from the N-terminus, the 224-residue chain is uncharacterized protein (224 aa).

This is an uncharacterized protein from Mycobacterium tuberculosis (strain ATCC 25618 / H37Rv).